A 467-amino-acid polypeptide reads, in one-letter code: UDP-N-acetylmuramate--L-alanine ligase (467 aa).

Residue 112–118 participates in ATP binding; that stretch reads GTHGKTT.

Belongs to the MurCDEF family.

It localises to the cytoplasm. It carries out the reaction UDP-N-acetyl-alpha-D-muramate + L-alanine + ATP = UDP-N-acetyl-alpha-D-muramoyl-L-alanine + ADP + phosphate + H(+). Its pathway is cell wall biogenesis; peptidoglycan biosynthesis. In terms of biological role, cell wall formation. In Polaromonas sp. (strain JS666 / ATCC BAA-500), this protein is UDP-N-acetylmuramate--L-alanine ligase.